The chain runs to 368 residues: tRNA/tmRNA (uracil-C(5))-methyltransferase (368 aa).

5 residues coordinate S-adenosyl-L-methionine: Gln186, Tyr214, Asn219, Glu235, and Asp295. Cys320 acts as the Nucleophile in catalysis. The active-site Proton acceptor is the Glu354.

It belongs to the class I-like SAM-binding methyltransferase superfamily. RNA M5U methyltransferase family. TrmA subfamily.

It carries out the reaction uridine(54) in tRNA + S-adenosyl-L-methionine = 5-methyluridine(54) in tRNA + S-adenosyl-L-homocysteine + H(+). It catalyses the reaction uridine(341) in tmRNA + S-adenosyl-L-methionine = 5-methyluridine(341) in tmRNA + S-adenosyl-L-homocysteine + H(+). In terms of biological role, dual-specificity methyltransferase that catalyzes the formation of 5-methyluridine at position 54 (m5U54) in all tRNAs, and that of position 341 (m5U341) in tmRNA (transfer-mRNA). This is tRNA/tmRNA (uracil-C(5))-methyltransferase from Aromatoleum aromaticum (strain DSM 19018 / LMG 30748 / EbN1) (Azoarcus sp. (strain EbN1)).